The sequence spans 367 residues: Protein RecA (367 aa).

73–80 (GPESSGKT) contributes to the ATP binding site. The tract at residues 345–367 (DEPVAKKASAKESKEAKELKEVE) is disordered.

It belongs to the RecA family.

It localises to the cytoplasm. In terms of biological role, can catalyze the hydrolysis of ATP in the presence of single-stranded DNA, the ATP-dependent uptake of single-stranded DNA by duplex DNA, and the ATP-dependent hybridization of homologous single-stranded DNAs. It interacts with LexA causing its activation and leading to its autocatalytic cleavage. This Herminiimonas arsenicoxydans protein is Protein RecA.